The primary structure comprises 269 residues: Phosphonates import ATP-binding protein PhnC (269 aa).

The 244-residue stretch at 8–251 (IHLYGASLRH…LLDALYANEQ (244 aa)) folds into the ABC transporter domain. Position 40–47 (40–47 (GPSGAGKS)) interacts with ATP.

This sequence belongs to the ABC transporter superfamily. Phosphonates importer (TC 3.A.1.9.1) family. In terms of assembly, the complex is composed of two ATP-binding proteins (PhnC), two transmembrane proteins (PhnE) and a solute-binding protein (PhnD).

The protein localises to the cell inner membrane. It catalyses the reaction phosphonate(out) + ATP + H2O = phosphonate(in) + ADP + phosphate + H(+). Part of the ABC transporter complex PhnCDE involved in phosphonates import. Responsible for energy coupling to the transport system. In Pseudomonas putida (strain ATCC 47054 / DSM 6125 / CFBP 8728 / NCIMB 11950 / KT2440), this protein is Phosphonates import ATP-binding protein PhnC.